The primary structure comprises 487 residues: MVSLICTLQSHRDDVNCVAFSGDLLATCSADKSICVYSSRDFSELPFSPLSGHGYGVHCCCFSACGQYLASCSTDATTMVWSMDTGEIEAVLEHPGRSPVRVCAFSPDSSHLVSGGSDGSIALWDFTSRTLRRTGVVNDTSIVACSFTPCGQMFITGSTYGDLRLWDLNMNHLHAEKNAHDLGVSCAQFAPKMMKGTDGCVQFRLASCGQDSLLKIWIVSLLPSAGIKMQLAHTLTGQSAPVLSCAYSPDGQMLVSGSVDKTVTVYQADEGVLLYTLHQHDRYVTACAFSPTAPLIATGSMDKSVNIWRMEEGSSAQGKSLPDEKAAFSNTEGRKACGHSRLMVSEWSEEEVLAWLREEGLEAVTDAFKSNNIDGEELLSLSKETLSSDLHIESLGLRSKVMKKIEELKMVPVYNGTPDEFLCPITREIMKDPVIAADGYSYEREAIEAWISTKNRTSPMTNLPLQTTLLTPNRTLKMAIFRWSTSQ.

WD repeat units follow at residues 10–47, 52–93, 95–134, 137–176, 179–227, 237–276, and 279–318; these read SHRDDVNCVAFSGDLLATCSADKSICVYSSRDFSELPF, GHGY…AVLE, PGRSPVRVCAFSPDSSHLVSGGSDGSIALWDFTSRTLRRT, VNDTSIVACSFTPCGQMFITGSTYGDLRLWDLNMNHLHAE, AHDL…SAGI, GQSAPVLSCAYSPDGQMLVSGSVDKTVTVYQADEGVLLYT, and QHDRYVTACAFSPTAPLIATGSMDKSVNIWRMEEGSSAQG. In terms of domain architecture, SAM spans 347–411; it reads WSEEEVLAWL…MKKIEELKMV (65 aa). Residues 416–487 enclose the U-box domain; that stretch reads GTPDEFLCPI…MAIFRWSTSQ (72 aa).

This Danio rerio (Zebrafish) protein is WD repeat, SAM and U-box domain-containing protein 1 (wdsub1).